The sequence spans 133 residues: Ribosome-binding factor A (133 aa).

This sequence belongs to the RbfA family. In terms of assembly, monomer. Binds 30S ribosomal subunits, but not 50S ribosomal subunits or 70S ribosomes.

It is found in the cytoplasm. Functionally, one of several proteins that assist in the late maturation steps of the functional core of the 30S ribosomal subunit. Associates with free 30S ribosomal subunits (but not with 30S subunits that are part of 70S ribosomes or polysomes). Required for efficient processing of 16S rRNA. May interact with the 5'-terminal helix region of 16S rRNA. This chain is Ribosome-binding factor A, found in Pseudomonas fluorescens (strain ATCC BAA-477 / NRRL B-23932 / Pf-5).